A 287-amino-acid chain; its full sequence is Zinc finger protein SNAI3 (287 aa).

The tract at residues 1–20 (MPRSFLVKTHSSHRVPNYGK) is SNAG domain. 4 consecutive C2H2-type zinc fingers follow at residues 147 to 169 (FECIHCHRPYHTLAGLARHQQLH), 178 to 200 (FTCRYCDKEYASLGALKMHIRTH), 204 to 226 (CICKVCGKAFSRPWLLQGHIRTH), and 232 to 254 (YTCSHCSRAFADRSNLRAHLQTH). The segment at 260-282 (YRCAVCPKAFSRMSLLARHEEAG) adopts a C2H2-type 5; degenerate zinc-finger fold.

It belongs to the snail C2H2-type zinc-finger protein family. In terms of tissue distribution, highly expressed in skeletal muscle and thymus. Lower expression in heart, lung and spleen.

It localises to the nucleus. Functionally, seems to inhibit myoblast differentiation. Transcriptional repressor of E-box-dependent transactivation of downstream myogenic bHLHs genes. Binds preferentially to the canonical E-box sequences 5'-CAGGTG-3' and 5'-CACCTG-3'. The sequence is that of Zinc finger protein SNAI3 (Snai3) from Mus musculus (Mouse).